Consider the following 49-residue polypeptide: MRVNITLACTECGDRNYITTKNKRNNPERIEMKKYCPRLNKYTLHRETK.

It belongs to the bacterial ribosomal protein bL33 family.

The protein is Large ribosomal subunit protein bL33B (rpmG2) of Staphylococcus epidermidis (strain ATCC 12228 / FDA PCI 1200).